A 319-amino-acid chain; its full sequence is Acetyl esterase (319 aa).

The Involved in the stabilization of the negatively charged intermediate by the formation of the oxyanion hole motif lies at 91 to 93 (HGG). Active-site residues include Ser-165, Asp-262, and His-292.

Belongs to the 'GDXG' lipolytic enzyme family. Homodimer. Interacts with MalT and MelA.

It localises to the cytoplasm. Its function is as follows. Displays esterase activity towards short chain fatty esters (acyl chain length of up to 8 carbons). Able to hydrolyze triacetylglycerol (triacetin) and tributyrylglycerol (tributyrin), but not trioleylglycerol (triolein) or cholesterol oleate. Negatively regulates MalT activity by antagonizing maltotriose binding. Inhibits MelA galactosidase activity. In Escherichia coli O8 (strain IAI1), this protein is Acetyl esterase.